A 100-amino-acid chain; its full sequence is Aspartyl/glutamyl-tRNA(Asn/Gln) amidotransferase subunit C (100 aa).

It belongs to the GatC family. As to quaternary structure, heterotrimer of A, B and C subunits.

It carries out the reaction L-glutamyl-tRNA(Gln) + L-glutamine + ATP + H2O = L-glutaminyl-tRNA(Gln) + L-glutamate + ADP + phosphate + H(+). The catalysed reaction is L-aspartyl-tRNA(Asn) + L-glutamine + ATP + H2O = L-asparaginyl-tRNA(Asn) + L-glutamate + ADP + phosphate + 2 H(+). Its function is as follows. Allows the formation of correctly charged Asn-tRNA(Asn) or Gln-tRNA(Gln) through the transamidation of misacylated Asp-tRNA(Asn) or Glu-tRNA(Gln) in organisms which lack either or both of asparaginyl-tRNA or glutaminyl-tRNA synthetases. The reaction takes place in the presence of glutamine and ATP through an activated phospho-Asp-tRNA(Asn) or phospho-Glu-tRNA(Gln). In Streptococcus suis (strain 98HAH33), this protein is Aspartyl/glutamyl-tRNA(Asn/Gln) amidotransferase subunit C.